We begin with the raw amino-acid sequence, 427 residues long: MDLLQQLQNQLNQFPSHTKLLLGFSGGLDSTVLLSLLAKLRKKQPHLSLRAIHIHHGLSQNADNWAIHCRQICQQLDISFLCEKVTINPRKGIEADAREARYQAIANHLQDNEILVTAHHQQDQTETFLLALKRGSGLQGLGAMQIQSVVFNLPIFRPLLHCTKQQLEQYAKTEKLSWIEDESNADNRYERNFLRNDILPKLRQRWQSIDNAVQRSAQHCFEQQQLINELLNDEFNKIYDKFDRTLSIANFATYSILKQKALLRTWLQHLHILMPSTIQLDNIMRNMIQAQEDRNPTCRLGNQVLRRYQKRLYATPILQDLSHIRLDIQANECINLPDNLGEICLLTKNEHLQVTWQNKQILLPLTQEKIEIRFRYSGKVKLPQGFHQEMKKCWQDHNVPVWQRTRIPLIFYGNKFKSAVGFFNNCE.

25–30 (SGGLDS) provides a ligand contact to ATP.

It belongs to the tRNA(Ile)-lysidine synthase family.

Its subcellular location is the cytoplasm. The enzyme catalyses cytidine(34) in tRNA(Ile2) + L-lysine + ATP = lysidine(34) in tRNA(Ile2) + AMP + diphosphate + H(+). Functionally, ligates lysine onto the cytidine present at position 34 of the AUA codon-specific tRNA(Ile) that contains the anticodon CAU, in an ATP-dependent manner. Cytidine is converted to lysidine, thus changing the amino acid specificity of the tRNA from methionine to isoleucine. In Histophilus somni (strain 2336) (Haemophilus somnus), this protein is tRNA(Ile)-lysidine synthase.